A 163-amino-acid chain; its full sequence is Transcription elongation factor GreA (163 aa).

A coiled-coil region spans residues 45–65 (NAEYHAAREKQAFIEARINEL).

Belongs to the GreA/GreB family.

In terms of biological role, necessary for efficient RNA polymerase transcription elongation past template-encoded arresting sites. The arresting sites in DNA have the property of trapping a certain fraction of elongating RNA polymerases that pass through, resulting in locked ternary complexes. Cleavage of the nascent transcript by cleavage factors such as GreA or GreB allows the resumption of elongation from the new 3'terminus. GreA releases sequences of 2 to 3 nucleotides. The polypeptide is Transcription elongation factor GreA (Helicobacter hepaticus (strain ATCC 51449 / 3B1)).